A 169-amino-acid chain; its full sequence is Small ribosomal subunit protein uS13m (169 aa).

Positions 149 to 169 are disordered; it reads KKLQEKKNKEQKKSQKCKTKK. Residues 150 to 161 show a composition bias toward basic and acidic residues; that stretch reads KLQEKKNKEQKK.

The protein belongs to the universal ribosomal protein uS13 family. Part of the small ribosomal subunit.

It is found in the mitochondrion. Located at the top of the head of the small subunit, it contacts several helices of the small subunit rRNA. The chain is Small ribosomal subunit protein uS13m (mrps13) from Dictyostelium discoideum (Social amoeba).